The sequence spans 388 residues: Succinate--CoA ligase [ADP-forming] subunit beta (388 aa).

Positions 9-244 (KEILRKFGVA…LDEEDPAEIE (236 aa)) constitute an ATP-grasp domain. ATP contacts are provided by residues K46, 53 to 55 (GRG), E99, A102, and E107. Mg(2+) is bound by residues N199 and D213. Substrate contacts are provided by residues N264 and 321–323 (GIM).

This sequence belongs to the succinate/malate CoA ligase beta subunit family. In terms of assembly, heterotetramer of two alpha and two beta subunits. Requires Mg(2+) as cofactor.

It carries out the reaction succinate + ATP + CoA = succinyl-CoA + ADP + phosphate. It catalyses the reaction GTP + succinate + CoA = succinyl-CoA + GDP + phosphate. It functions in the pathway carbohydrate metabolism; tricarboxylic acid cycle; succinate from succinyl-CoA (ligase route): step 1/1. Succinyl-CoA synthetase functions in the citric acid cycle (TCA), coupling the hydrolysis of succinyl-CoA to the synthesis of either ATP or GTP and thus represents the only step of substrate-level phosphorylation in the TCA. The beta subunit provides nucleotide specificity of the enzyme and binds the substrate succinate, while the binding sites for coenzyme A and phosphate are found in the alpha subunit. The sequence is that of Succinate--CoA ligase [ADP-forming] subunit beta from Burkholderia lata (strain ATCC 17760 / DSM 23089 / LMG 22485 / NCIMB 9086 / R18194 / 383).